An 83-amino-acid polypeptide reads, in one-letter code: Late seed maturation protein P8B6 (83 aa).

Composition is skewed to basic and acidic residues over residues 1–18 (MASQ…KKGE) and 37–51 (AEGR…KEQL). Residues 1–83 (MASQQEKKQL…DAEDEPSTRT (83 aa)) form a disordered region. The segment covering 73-83 (EDAEDEPSTRT) has biased composition (acidic residues).

It belongs to the small hydrophilic plant seed protein family.

The protein localises to the cytoplasm. In terms of biological role, this protein may play a role in equipping the seed for survival, maintaining a minimal level of hydration in the dry organism and preventing the denaturation of cytoplasmic components, or may play a role during imbibition by controlling water uptake. The chain is Late seed maturation protein P8B6 from Raphanus sativus (Radish).